The primary structure comprises 464 residues: Gamma-aminobutyric acid receptor subunit rho-3 (464 aa).

Positions 1–15 (MVLAFWLAFFTYTWI) are cleaved as a signal peptide. Topologically, residues 16-263 (TLMLDASAVK…LFINFVLRRH (248 aa)) are extracellular. Position 108 (R108) interacts with 4-aminobutanoate. N123 is a glycosylation site (N-linked (GlcNAc...) asparagine). A 4-aminobutanoate-binding site is contributed by S172. A disulfide bridge connects residues C181 and C195. The N-linked (GlcNAc...) asparagine glycan is linked to N194. Residue E200 participates in 4-aminobutanoate binding. A helical membrane pass occupies residues 264-284 (IFFFVLQTYFPAMLMVMLSWV). Residues 285–296 (SFWIDRRAVPAR) lie on the Cytoplasmic side of the membrane. The chain crosses the membrane as a helical span at residues 297–317 (VSLGITTVLTMSTIVTGVSAS). The Extracellular segment spans residues 318-328 (MPQVSYVKAVD). Residues 329–349 (VYMWVSSLFVFLSVIEYAAVN) traverse the membrane as a helical segment. Positions 344–445 (EYAAVNYLTT…NNHVIDTYSR (102 aa)) are interaction with SQSTM1. Residues 350–443 (YLTTVEEWKQ…LENNHVIDTY (94 aa)) are Cytoplasmic-facing. The helical transmembrane segment at 444–464 (SRIVFPVVYIIFNLFYWGIYV) threads the bilayer.

Belongs to the ligand-gated ion channel (TC 1.A.9) family. Gamma-aminobutyric acid receptor (TC 1.A.9.5) subfamily. GABRR3 sub-subfamily. In terms of assembly, three rho subunits (rho-1/GBRR1, rho-2/GBRR2 and rho-3/GBRR3) coassemble either to form functional homopentamers or heteropentamers. Forms a ternary complex with SQSTM1 and PRKCZ. In terms of tissue distribution, expressed in retina.

It is found in the postsynaptic cell membrane. It localises to the cell membrane. The catalysed reaction is chloride(in) = chloride(out). With respect to regulation, activated by agonists in the following the potency order: muscimol &gt; TACP &gt; TACA &gt; thiomuscimol &gt; CAMP &gt; CACA, when forming a homopentamer. Inhibited by TPMPA, a rho-specific antagonist, when forming a homopentamer. Inhibited antagonists in the following the potency order: TAMP = TPMPA &gt; P4MPA = THIP &gt; 14AA &gt; 3-APA, when forming a homopentamer. Rho subunit of the pentameric ligand-gated chloride channels responsible for mediating the effects of gamma-aminobutyric acid (GABA), the major inhibitory neurotransmitter in the brain. Rho-containing GABA-gated chloride channels are a subclass of GABA(A) receptors (GABAARs) entirely composed of rho subunits, where GABA molecules bind at the rho intersubunit interfaces. When activated by GABA, rho-GABAARs selectively allow the flow of chloride anions across the cell membrane down their electrochemical gradient. The sequence is that of Gamma-aminobutyric acid receptor subunit rho-3 from Rattus norvegicus (Rat).